A 194-amino-acid chain; its full sequence is UPF0301 protein CBU_2093 (194 aa).

The protein belongs to the UPF0301 (AlgH) family.

This chain is UPF0301 protein CBU_2093, found in Coxiella burnetii (strain RSA 493 / Nine Mile phase I).